The primary structure comprises 515 residues: Maturase K (515 aa).

Belongs to the intron maturase 2 family. MatK subfamily.

It localises to the plastid. It is found in the chloroplast. In terms of biological role, usually encoded in the trnK tRNA gene intron. Probably assists in splicing its own and other chloroplast group II introns. The chain is Maturase K from Picea sitchensis (Sitka spruce).